Consider the following 416-residue polypeptide: Serine hydroxymethyltransferase (416 aa).

Residues leucine 121 and 125–127 (GHL) contribute to the (6S)-5,6,7,8-tetrahydrofolate site. Lysine 230 is modified (N6-(pyridoxal phosphate)lysine). 354–356 (SPF) contributes to the (6S)-5,6,7,8-tetrahydrofolate binding site.

This sequence belongs to the SHMT family. In terms of assembly, homodimer. Pyridoxal 5'-phosphate is required as a cofactor.

The protein resides in the cytoplasm. It catalyses the reaction (6R)-5,10-methylene-5,6,7,8-tetrahydrofolate + glycine + H2O = (6S)-5,6,7,8-tetrahydrofolate + L-serine. It participates in one-carbon metabolism; tetrahydrofolate interconversion. It functions in the pathway amino-acid biosynthesis; glycine biosynthesis; glycine from L-serine: step 1/1. Functionally, catalyzes the reversible interconversion of serine and glycine with tetrahydrofolate (THF) serving as the one-carbon carrier. This reaction serves as the major source of one-carbon groups required for the biosynthesis of purines, thymidylate, methionine, and other important biomolecules. Also exhibits THF-independent aldolase activity toward beta-hydroxyamino acids, producing glycine and aldehydes, via a retro-aldol mechanism. The protein is Serine hydroxymethyltransferase of Prochlorococcus marinus (strain MIT 9211).